The following is a 990-amino-acid chain: MDGNEIAHAKKLVYDLYSGSLSPSAIAATEKELQKAQRSQQGWNIGLFMLQSKDVYEQFFGALTLQMKINTQLETLSDKDLVQLFVQLLQKLLWDDGLPALVERKVICTLASLTIKYELEKKEEASLKVIYCLFCNKLEFFNADMNAASVLNNLFPPASSRNAQLTASYINELLLELSFSIYTKENEDALFNNVFRPCSNIIVSVLVFIFTNYSLDLSKEKNVAALEEALNCMIAISSYLAKASVSVQSVLPAFTECMDLTVNCIALDEVSEKAMNCLADLLANYSNFITQPTIERLWTILTGPWGETHLQQELEDPDSGEENDYSFLNIVIGFAEAMLPQIIDHIQEEKSIRLLYILASLLSFPGYAIVEEKVSWRTLEFWTTLIEDFSMSKAATDPSKDEIFKQIAFSVVEKAWWKMLLPSPEQWNSWPSSSRDSFNSYRRDLGDLLESSYSIFGERLYAMYITTIENFFSDGTGSPQSLEVSFYCLCCILEYDTNDSDTLDAWLTRLFETSFAIKASAFQNPQLLKTCSQLLSSCSCFLQNHPQYLNISLPVLFDALHISETSIQMTVSRSIHTLCTTCASHLLTEIDGFMAVVEELTPKLVYVPSVLEKIYSSVGYVTQRIEDIELRISYLMRLLNCILAQLQPSLYPNLEIFENVLKSCLQSVAGVALSQSPIGESPIIDVEQSTQETTFWQQSCIAEFQAKLISFLTHSESMALQYSDVVGLICKIMIAGLNEVEPSPFSLPIVTTIQYFCDRFTEFPAAVLLTLGSAILTCPYGQTDIIDKVLIDMCSSIQNSVVIINEESFMNNIDITVELYHFFSIILQKHPSFLETMYPDFTQLILNRAINLLGKPERLLESAAGQFIISFITSEKSDLLNTHTDFVNAIRSPLIAKILLGFGGNASRSSLPLLSDILGKLKAQNFSATRACLTQSLEEEGFPSRNVSNEIKRRFLTDLLKARIKDKVKQFWILCKGLESTPYGNSSWTF.

The protein belongs to the importin beta family.

It is found in the nucleus. Its function is as follows. Functions as a component of the nuclear pore complex (NPC). NPC components, collectively referred to as nucleoporins (NUPs), can play the role of both NPC structural components and of docking or interaction partners for transiently associated nuclear transport factors. Active directional transport is assured by both, a Phe-Gly (FG) repeat affinity gradient for these transport factors across the NPC and a transport cofactor concentration gradient across the nuclear envelope. This chain is Importin beta-like protein kap111 (kap111), found in Schizosaccharomyces pombe (strain 972 / ATCC 24843) (Fission yeast).